The sequence spans 261 residues: Cytochrome c oxidase subunit 3 (261 aa).

Residues 1–15 (MTHQTHAYHMVNPSP) lie on the Mitochondrial matrix side of the membrane. A helical membrane pass occupies residues 16 to 34 (WPLTGALSALLMTSGLTMW). At 35–40 (FHFNSM) the chain is on the mitochondrial intermembrane side. The chain crosses the membrane as a helical span at residues 41 to 66 (TLLTLGLTTNMLTMYQWWRDIIREST). Topologically, residues 67 to 72 (FQGHHT) are mitochondrial matrix. Residues 73–105 (PNVQKGLRYGMILFIISEVLFFTGFFWAFYHSS) traverse the membrane as a helical segment. Residues 106–128 (LAPTPELGGCWPPTGIHPLNPLE) are Mitochondrial intermembrane-facing. Residues 129–152 (VPLLNTSVLLASGVSITWAHHSLM) traverse the membrane as a helical segment. Over 153 to 155 (EGN) the chain is Mitochondrial matrix. The chain crosses the membrane as a helical span at residues 156–183 (RNHMLQALFITISLGVYFTLLQASEYYE). Residues 184–190 (APFTISD) lie on the Mitochondrial intermembrane side of the membrane. A helical transmembrane segment spans residues 191–223 (GVYGSTFFVATGFHGLHVIIGSTFLIVCFFRQL). At 224 to 232 (KFHFTSNHH) the chain is on the mitochondrial matrix side. A helical membrane pass occupies residues 233–256 (FGFEAAAWYWHFVDVVWLFLYVSI). Topologically, residues 257–261 (YWWGS) are mitochondrial intermembrane.

This sequence belongs to the cytochrome c oxidase subunit 3 family. In terms of assembly, component of the cytochrome c oxidase (complex IV, CIV), a multisubunit enzyme composed of 14 subunits. The complex is composed of a catalytic core of 3 subunits MT-CO1, MT-CO2 and MT-CO3, encoded in the mitochondrial DNA, and 11 supernumerary subunits COX4I, COX5A, COX5B, COX6A, COX6B, COX6C, COX7A, COX7B, COX7C, COX8 and NDUFA4, which are encoded in the nuclear genome. The complex exists as a monomer or a dimer and forms supercomplexes (SCs) in the inner mitochondrial membrane with NADH-ubiquinone oxidoreductase (complex I, CI) and ubiquinol-cytochrome c oxidoreductase (cytochrome b-c1 complex, complex III, CIII), resulting in different assemblies (supercomplex SCI(1)III(2)IV(1) and megacomplex MCI(2)III(2)IV(2)).

The protein localises to the mitochondrion inner membrane. It catalyses the reaction 4 Fe(II)-[cytochrome c] + O2 + 8 H(+)(in) = 4 Fe(III)-[cytochrome c] + 2 H2O + 4 H(+)(out). In terms of biological role, component of the cytochrome c oxidase, the last enzyme in the mitochondrial electron transport chain which drives oxidative phosphorylation. The respiratory chain contains 3 multisubunit complexes succinate dehydrogenase (complex II, CII), ubiquinol-cytochrome c oxidoreductase (cytochrome b-c1 complex, complex III, CIII) and cytochrome c oxidase (complex IV, CIV), that cooperate to transfer electrons derived from NADH and succinate to molecular oxygen, creating an electrochemical gradient over the inner membrane that drives transmembrane transport and the ATP synthase. Cytochrome c oxidase is the component of the respiratory chain that catalyzes the reduction of oxygen to water. Electrons originating from reduced cytochrome c in the intermembrane space (IMS) are transferred via the dinuclear copper A center (CU(A)) of subunit 2 and heme A of subunit 1 to the active site in subunit 1, a binuclear center (BNC) formed by heme A3 and copper B (CU(B)). The BNC reduces molecular oxygen to 2 water molecules using 4 electrons from cytochrome c in the IMS and 4 protons from the mitochondrial matrix. This is Cytochrome c oxidase subunit 3 (MT-CO3) from Antidorcas marsupialis (Springbok).